Here is a 199-residue protein sequence, read N- to C-terminus: Dephospho-CoA kinase (199 aa).

One can recognise a DPCK domain in the interval R3 to T199. An ATP-binding site is contributed by G11–T16.

It belongs to the CoaE family.

Its subcellular location is the cytoplasm. The catalysed reaction is 3'-dephospho-CoA + ATP = ADP + CoA + H(+). Its pathway is cofactor biosynthesis; coenzyme A biosynthesis; CoA from (R)-pantothenate: step 5/5. Catalyzes the phosphorylation of the 3'-hydroxyl group of dephosphocoenzyme A to form coenzyme A. The chain is Dephospho-CoA kinase from Coxiella burnetii (strain RSA 493 / Nine Mile phase I).